The sequence spans 205 residues: Thymidylate kinase (205 aa).

An ATP-binding site is contributed by 11–18 (GPEGSGKT).

This sequence belongs to the thymidylate kinase family.

The enzyme catalyses dTMP + ATP = dTDP + ADP. In terms of biological role, phosphorylation of dTMP to form dTDP in both de novo and salvage pathways of dTTP synthesis. The polypeptide is Thymidylate kinase (Clostridium novyi (strain NT)).